We begin with the raw amino-acid sequence, 331 residues long: Tryptophan--tRNA ligase 1 (331 aa).

Residues 9-11 and 17-18 each bind ATP; these read KPT and GN. The short motif at 10–18 is the 'HIGH' region element; it reads PTGHLTLGN. D137 contacts L-tryptophan. ATP-binding positions include 149-151, V188, and 197-201; these read GDD and KMGKS. The short motif at 197-201 is the 'KMSKS' region element; the sequence is KMGKS.

This sequence belongs to the class-I aminoacyl-tRNA synthetase family. Homodimer.

Its subcellular location is the cytoplasm. The catalysed reaction is tRNA(Trp) + L-tryptophan + ATP = L-tryptophyl-tRNA(Trp) + AMP + diphosphate + H(+). Catalyzes the attachment of tryptophan to tRNA(Trp). The polypeptide is Tryptophan--tRNA ligase 1 (Streptomyces avermitilis (strain ATCC 31267 / DSM 46492 / JCM 5070 / NBRC 14893 / NCIMB 12804 / NRRL 8165 / MA-4680)).